The primary structure comprises 398 residues: Subtilisin-like protease CPC735_015300 (398 aa).

The signal sequence occupies residues 1 to 19 (MGFIKTLSLSLAAASAANA). Positions 20-116 (AKILSPSRPD…IEHDHVVRLT (97 aa)) are excised as a propeptide. One can recognise an Inhibitor I9 domain in the interval 35-115 (QYIVVMKDGV…FIEHDHVVRL (81 aa)). Residues 126–398 (TWGLGRVSHQ…NKLTYNGNGQ (273 aa)) form the Peptidase S8 domain. Catalysis depends on charge relay system residues aspartate 158 and histidine 189. An N-linked (GlcNAc...) asparagine glycan is attached at asparagine 250. The active-site Charge relay system is serine 344. N-linked (GlcNAc...) asparagine glycosylation is present at asparagine 362.

It belongs to the peptidase S8 family.

It localises to the secreted. Functionally, secreted subtilisin-like serine protease with keratinolytic activity that contributes to pathogenicity. The protein is Subtilisin-like protease CPC735_015300 of Coccidioides posadasii (strain C735) (Valley fever fungus).